The sequence spans 109 residues: Nucleoid-associated protein HAPS_1040 (109 aa).

The segment at 1-21 is disordered; the sequence is MFGKGGLGGLMKQAQQMQERM. The segment covering 10 to 19 has biased composition (low complexity); that stretch reads LMKQAQQMQE.

It belongs to the YbaB/EbfC family. As to quaternary structure, homodimer.

The protein resides in the cytoplasm. Its subcellular location is the nucleoid. Functionally, binds to DNA and alters its conformation. May be involved in regulation of gene expression, nucleoid organization and DNA protection. The polypeptide is Nucleoid-associated protein HAPS_1040 (Glaesserella parasuis serovar 5 (strain SH0165) (Haemophilus parasuis)).